The following is a 170-amino-acid chain: RNA pyrophosphohydrolase (170 aa).

A Nudix hydrolase domain is found at 8–151 (PYRPNVGIAL…KKALYAELIP (144 aa)). A Nudix box motif is present at residues 42-63 (GGIDEGETPQVAALREMGEEIG).

This sequence belongs to the Nudix hydrolase family. RppH subfamily. It depends on a divalent metal cation as a cofactor.

Its function is as follows. Accelerates the degradation of transcripts by removing pyrophosphate from the 5'-end of triphosphorylated RNA, leading to a more labile monophosphorylated state that can stimulate subsequent ribonuclease cleavage. This chain is RNA pyrophosphohydrolase, found in Gluconobacter oxydans (strain 621H) (Gluconobacter suboxydans).